We begin with the raw amino-acid sequence, 264 residues long: Small ribosomal subunit protein eS1 (264 aa).

Lys-34 is modified (N6-acetyllysine; alternate). Lys-34 participates in a covalent cross-link: Glycyl lysine isopeptide (Lys-Gly) (interchain with G-Cter in SUMO2); alternate. At Lys-56 the chain carries N6-acetyllysine. Tyr-155 bears the ADP-ribosyltyrosine mark. The segment at 233–264 (GEGSSSGKATGDETGAKVERADGYEPPVQESV) is disordered. Residues Ser-236 and Ser-237 each carry the phosphoserine modification. Over residues 242 to 255 (TGDETGAKVERADG) the composition is skewed to basic and acidic residues. Lys-249 carries the post-translational modification N6-acetyllysine; alternate. Residue Lys-249 forms a Glycyl lysine isopeptide (Lys-Gly) (interchain with G-Cter in SUMO2); alternate linkage. Tyr-256 carries the phosphotyrosine modification. Ser-263 carries the phosphoserine modification.

It belongs to the eukaryotic ribosomal protein eS1 family. Component of the small ribosomal subunit. Mature ribosomes consist of a small (40S) and a large (60S) subunit. The 40S subunit contains about 33 different proteins and 1 molecule of RNA (18S). The 60S subunit contains about 49 different proteins and 3 molecules of RNA (28S, 5.8S and 5S). Part of the small subunit (SSU) processome, composed of more than 70 proteins and the RNA chaperone small nucleolar RNA (snoRNA) U3. In terms of processing, ADP-ribosylated at Tyr-155 by PARP1 in presence of HPF1.

It is found in the cytoplasm. Its subcellular location is the nucleus. The protein resides in the nucleolus. Functionally, component of the small ribosomal subunit. The ribosome is a large ribonucleoprotein complex responsible for the synthesis of proteins in the cell. Part of the small subunit (SSU) processome, first precursor of the small eukaryotic ribosomal subunit. During the assembly of the SSU processome in the nucleolus, many ribosome biogenesis factors, an RNA chaperone and ribosomal proteins associate with the nascent pre-rRNA and work in concert to generate RNA folding, modifications, rearrangements and cleavage as well as targeted degradation of pre-ribosomal RNA by the RNA exosome. May play a role during erythropoiesis. This is Small ribosomal subunit protein eS1 from Callithrix jacchus (White-tufted-ear marmoset).